We begin with the raw amino-acid sequence, 431 residues long: Adenylosuccinate synthetase (431 aa).

GTP-binding positions include 12-18 and 40-42; these read GDEGKGK and GHT. D13 serves as the catalytic Proton acceptor. Mg(2+)-binding residues include D13 and G40. IMP-binding positions include 13-16, 38-41, T131, R145, Q225, T240, and R304; these read DEGK and NAGH. H41 functions as the Proton donor in the catalytic mechanism. 300-306 contacts substrate; that stretch reads VNTGRRR. Residues R306, 332-334, and 414-416 each bind GTP; these read KLD and STS.

This sequence belongs to the adenylosuccinate synthetase family. Homodimer. Mg(2+) is required as a cofactor.

The protein localises to the cytoplasm. It catalyses the reaction IMP + L-aspartate + GTP = N(6)-(1,2-dicarboxyethyl)-AMP + GDP + phosphate + 2 H(+). It participates in purine metabolism; AMP biosynthesis via de novo pathway; AMP from IMP: step 1/2. In terms of biological role, plays an important role in the de novo pathway of purine nucleotide biosynthesis. Catalyzes the first committed step in the biosynthesis of AMP from IMP. The polypeptide is Adenylosuccinate synthetase (Beijerinckia indica subsp. indica (strain ATCC 9039 / DSM 1715 / NCIMB 8712)).